The following is a 111-amino-acid chain: Large ribosomal subunit protein P1 (111 aa).

Residues 84–111 (PAEAAAAEEKKEEEKEESDEDMGFGLFD) form a disordered region.

It belongs to the eukaryotic ribosomal protein P1/P2 family. In terms of assembly, P1 and P2 exist as dimers at the large ribosomal subunit. In terms of processing, phosphorylated.

Functionally, plays an important role in the elongation step of protein synthesis. This Aspergillus fumigatus (strain ATCC MYA-4609 / CBS 101355 / FGSC A1100 / Af293) (Neosartorya fumigata) protein is Large ribosomal subunit protein P1.